Here is a 272-residue protein sequence, read N- to C-terminus: PHD finger protein ALFIN-LIKE 6 (272 aa).

The segment covering 1 to 23 (MEGGGGGGGGGGGGGGGGGGGGA) has biased composition (gly residues). Disordered regions lie at residues 1–24 (MEGGGGGGGGGGGGGGGGGGGGAP) and 162–218 (QAKE…DNTL). The segment covering 168 to 182 (PNSSSKSNKPSSKVQ) has biased composition (low complexity). Over residues 183–200 (SKAESRSKSKLSAPKDEE) the composition is skewed to basic and acidic residues. Acidic residues predominate over residues 201-214 (GSGDDEGEEEEDDH). The PHD-type zinc finger occupies 216–268 (NTLCGTCGTNDGKDEFWICCDNCEKWYHGKCVKITPARAEHIKQYKCPDCTNK).

It belongs to the Alfin family.

It localises to the nucleus. Histone-binding component that specifically recognizes H3 tails trimethylated on 'Lys-4' (H3K4me3), which mark transcription start sites of virtually all active genes. The polypeptide is PHD finger protein ALFIN-LIKE 6 (Oryza sativa subsp. indica (Rice)).